The chain runs to 469 residues: Glutamate--tRNA ligase 1 (469 aa).

Residues 9-19 carry the 'HIGH' region motif; the sequence is PSPTGYLHVGG. Residues cysteine 98, cysteine 100, cysteine 125, and glutamate 127 each coordinate Zn(2+). The short motif at 236-240 is the 'KMSKS' region element; sequence RLSKR. An ATP-binding site is contributed by lysine 239.

Belongs to the class-I aminoacyl-tRNA synthetase family. Glutamate--tRNA ligase type 1 subfamily. Monomer. The cofactor is Zn(2+).

It is found in the cytoplasm. The catalysed reaction is tRNA(Glu) + L-glutamate + ATP = L-glutamyl-tRNA(Glu) + AMP + diphosphate. Functionally, catalyzes the attachment of glutamate to tRNA(Glu) in a two-step reaction: glutamate is first activated by ATP to form Glu-AMP and then transferred to the acceptor end of tRNA(Glu). The chain is Glutamate--tRNA ligase 1 from Nitrosococcus oceani (strain ATCC 19707 / BCRC 17464 / JCM 30415 / NCIMB 11848 / C-107).